We begin with the raw amino-acid sequence, 171 residues long: NRR repressor homolog 2 (171 aa).

Residues 1-12 (MEARLSTGEKTK) show a composition bias toward basic and acidic residues. Disordered stretches follow at residues 1–45 (MEAR…QQQM), 65–94 (AALP…APWR), and 119–143 (TTKG…EEDK). Acidic residues predominate over residues 26–43 (PEEETAAETTTSEEEEQQ).

This sequence belongs to the NPR1-interactor family. In terms of assembly, interacts with NPR1/NH1. Interacts with NPR3/NH3.

It is found in the nucleus. Binds to and weakly represses NPR1/NH1-mediated transcriptional activation of LG2 in vitro. The sequence is that of NRR repressor homolog 2 from Oryza sativa subsp. japonica (Rice).